The primary structure comprises 407 residues: Tryptophan synthase beta chain (407 aa).

Residue Lys91 is modified to N6-(pyridoxal phosphate)lysine.

This sequence belongs to the TrpB family. Tetramer of two alpha and two beta chains. The cofactor is pyridoxal 5'-phosphate.

The enzyme catalyses (1S,2R)-1-C-(indol-3-yl)glycerol 3-phosphate + L-serine = D-glyceraldehyde 3-phosphate + L-tryptophan + H2O. Its pathway is amino-acid biosynthesis; L-tryptophan biosynthesis; L-tryptophan from chorismate: step 5/5. Its function is as follows. The beta subunit is responsible for the synthesis of L-tryptophan from indole and L-serine. The chain is Tryptophan synthase beta chain from Streptococcus pneumoniae serotype 2 (strain D39 / NCTC 7466).